Here is a 203-residue protein sequence, read N- to C-terminus: Cardiotrophin-1 (203 aa).

This sequence belongs to the IL-6 superfamily. As to expression, expressed in the ventricle and atrium of adult rats. Also detected in the lung, kidney, liver, skeletal muscle, stomach and urinary bladder. Not detected in brain, colon, testis, spleen or thymus. Overexpressed in the ventricles in the case of hypertension and hypertrophy.

Its subcellular location is the secreted. Functionally, induces cardiac myocyte hypertrophy in vitro. Binds to and activates the ILST/gp130 receptor. In Rattus norvegicus (Rat), this protein is Cardiotrophin-1 (Ctf1).